A 197-amino-acid polypeptide reads, in one-letter code: Adenylate kinase (197 aa).

19–24 (GSGKGT) lines the ATP pocket. The interval 39–68 (SSGDLLRAEVQSGSPKGKELKAMMERGELV) is NMP. Residues serine 40, arginine 45, 66–68 (ELV), 95–98 (RYPR), and glutamine 102 each bind AMP. Residues 132 to 142 (KRAETSNRVDD) form an LID region. Arginine 133 contacts ATP. AMP-binding residues include arginine 139 and arginine 150. Glycine 178 provides a ligand contact to ATP.

It belongs to the adenylate kinase family. In terms of assembly, monomer.

Its subcellular location is the cytoplasm. The catalysed reaction is AMP + ATP = 2 ADP. In terms of biological role, catalyzes the reversible transfer of the terminal phosphate group between ATP and AMP. Plays an important role in cellular energy homeostasis and in adenine nucleotide metabolism. The sequence is that of Adenylate kinase from Schistosoma mansoni (Blood fluke).